A 482-amino-acid chain; its full sequence is MVQLNQNFINTIAQELPAHLSMDDFIAACSRPLRRSIRVNTLKTSSEDFKRLMQPKGWTFEPIPWCEDGFWISYDEEEQLGNALEHIQGLFYIQEASSMLPPTALFTPNADWQCVLDLASAPGSKTTQMAALMNNQGLLVANEYSASRVKVLHANVLRMGASHCALTHFDGRVFGEYLYESFDAVLIDAPCGGEGTVRKDADALKSWSLDEVIEISETQKALIESAFLALKPGGSLVYSTCTLNRHENQGVCEYLQQTYGDAVQFESLSQLFDGAEKATTPEGFLHVWPQIYDSEGFFVAKLTKTRSVPRLQPEPKLQKNFPFTEASAKQAKAIQAYFADDLGIELPDDLIMVRDDEFWLFPHEFRDFIGKMRFQRIGVKLADHSKHGFKVRHEAIIALAGKALKAGAKNGAKVVEVSDEQAKEYLMGRDIPLDTAGKAQGEVIVCYGGAPLGMAKHLGNKLKNSLPRDLVKDKVLLLPPQA.

Residues 119 to 125, glutamate 143, aspartate 170, and aspartate 188 contribute to the S-adenosyl-L-methionine site; that span reads ASAPGSK. Cysteine 241 functions as the Nucleophile in the catalytic mechanism.

The protein belongs to the class I-like SAM-binding methyltransferase superfamily. RsmB/NOP family.

It localises to the cytoplasm. The catalysed reaction is cytidine(1407) in 16S rRNA + S-adenosyl-L-methionine = 5-methylcytidine(1407) in 16S rRNA + S-adenosyl-L-homocysteine + H(+). Its function is as follows. Specifically methylates the cytosine at position 1407 (m5C1407) of 16S rRNA. This chain is Ribosomal RNA small subunit methyltransferase F, found in Shewanella sp. (strain ANA-3).